A 273-amino-acid chain; its full sequence is Translation initiation factor IF-3, mitochondrial (273 aa).

The transit peptide at 1 to 32 directs the protein to the mitochondrion; that stretch reads MAALFLKKLTLQTVKTENYCIRRCLGKYILQG. A propeptide spans 33–92 (removed in mature form); it reads PAPTQQPPRPSCLIHAKAFSTEDTQDEMTKKKKNETAFSSVGRKINERIIHVLDEQGNDL. Residues 242–273 form a disordered region; it reads EEAAWKAAPDTPRRDALNGGDGKDGASGVLPQ. Positions 252 to 265 are enriched in basic and acidic residues; it reads TPRRDALNGGDGKD.

It belongs to the IF-3 family.

The protein localises to the mitochondrion. Functionally, IF-3 binds to the 28S ribosomal subunit and shifts the equilibrium between 55S ribosomes and their 39S and 28S subunits in favor of the free subunits, thus enhancing the availability of 28S subunits on which protein synthesis initiation begins. The polypeptide is Translation initiation factor IF-3, mitochondrial (MTIF3) (Bos taurus (Bovine)).